The sequence spans 453 residues: Odorant receptor 83a (453 aa).

Residues M1–C28 are Cytoplasmic-facing. Residues I29 to V49 traverse the membrane as a helical segment. Residues R50–D85 lie on the Extracellular side of the membrane. The chain crosses the membrane as a helical span at residues F86–Y106. Residues F107–L148 are Cytoplasmic-facing. The helical transmembrane segment at W149 to I169 threads the bilayer. Residues A170–Q203 lie on the Extracellular side of the membrane. Residues I204–I224 form a helical membrane-spanning segment. Topologically, residues S225–S322 are cytoplasmic. A helical membrane pass occupies residues P323–S343. The Extracellular portion of the chain corresponds to T344 to G359. Residues Q360–F380 traverse the membrane as a helical segment. The Cytoplasmic segment spans residues Q381 to F408. Residues F409–V429 traverse the membrane as a helical segment. Topologically, residues D430–E453 are extracellular.

Belongs to the insect chemoreceptor superfamily. Heteromeric odorant receptor channel (TC 1.A.69) family. Or2a subfamily. Interacts with Orco. Complexes exist early in the endomembrane system in olfactory sensory neurons (OSNs), coupling these complexes to the conserved ciliary trafficking pathway.

The protein localises to the cell membrane. In terms of biological role, odorant receptor which mediates acceptance or avoidance behavior, depending on its substrates. The odorant receptor repertoire encodes a large collection of odor stimuli that vary widely in identity, intensity, and duration. May form a complex with Orco to form odorant-sensing units, providing sensitive and prolonged odorant signaling and calcium permeability. Involved in the behavioral responses to pentanol, ethyl acetate, and propyl acetate. This chain is Odorant receptor 83a (Or83a), found in Drosophila melanogaster (Fruit fly).